The primary structure comprises 146 residues: Large ribosomal subunit protein uL15 (146 aa).

Residues 1 to 13 (MKLHELKPSEGSR) are compositionally biased toward basic and acidic residues. Residues 1-57 (MKLHELKPSEGSRKTRNRVGRGIGSGNGKTAGKGHKGQNARSGGGVRPGFEGGQMPL) are disordered. Gly residues-rich tracts occupy residues 21-31 (RGIGSGNGKTA) and 42-52 (SGGGVRPGFEG).

Belongs to the universal ribosomal protein uL15 family. Part of the 50S ribosomal subunit.

Functionally, binds to the 23S rRNA. This chain is Large ribosomal subunit protein uL15, found in Bacillus subtilis (strain 168).